The sequence spans 149 residues: Large ribosomal subunit protein eL19 (149 aa).

Positions 45-94 (VADGTIDAEDTQGNSRGRARERDAKESYGHKKGAGSRKGKAGARQNEKRE) are disordered. Residues 62–73 (RARERDAKESYG) show a composition bias toward basic and acidic residues. The segment covering 74 to 85 (HKKGAGSRKGKA) has biased composition (basic residues).

The protein belongs to the eukaryotic ribosomal protein eL19 family. As to quaternary structure, part of the 50S ribosomal subunit.

Functionally, binds to the 23S rRNA. The polypeptide is Large ribosomal subunit protein eL19 (Halobacterium salinarum (strain ATCC 700922 / JCM 11081 / NRC-1) (Halobacterium halobium)).